A 303-amino-acid polypeptide reads, in one-letter code: Oxygen-dependent coproporphyrinogen-III oxidase (303 aa).

Ser-93 is a binding site for substrate. The a divalent metal cation site is built by His-97 and His-107. The active-site Proton donor is the His-107. 109–111 (NVR) serves as a coordination point for substrate. His-149 and His-179 together coordinate a divalent metal cation. The tract at residues 244–279 (YVEFNLVFDRGTLFGLQSGGRTESILLSMPPMAQWR) is important for dimerization. 262-264 (GGR) lines the substrate pocket.

This sequence belongs to the aerobic coproporphyrinogen-III oxidase family. As to quaternary structure, homodimer. It depends on a divalent metal cation as a cofactor.

It localises to the cytoplasm. It carries out the reaction coproporphyrinogen III + O2 + 2 H(+) = protoporphyrinogen IX + 2 CO2 + 2 H2O. It functions in the pathway porphyrin-containing compound metabolism; protoporphyrin-IX biosynthesis; protoporphyrinogen-IX from coproporphyrinogen-III (O2 route): step 1/1. Its function is as follows. Involved in the heme biosynthesis. Catalyzes the aerobic oxidative decarboxylation of propionate groups of rings A and B of coproporphyrinogen-III to yield the vinyl groups in protoporphyrinogen-IX. This Bordetella petrii (strain ATCC BAA-461 / DSM 12804 / CCUG 43448) protein is Oxygen-dependent coproporphyrinogen-III oxidase.